Reading from the N-terminus, the 247-residue chain is Cytochrome c oxidase subunit 2 (247 aa).

At 1-38 (MKEMMMSNMFNDVPTPWAMFFQDSATPNMEGMLELHNN) the chain is on the mitochondrial intermembrane side. Residues 39-58 (VVFYLCMMLGFVTFMLYNML) traverse the membrane as a helical segment. Residues 59–78 (TTYNKSVMPYKYLNQGQFME) lie on the Mitochondrial matrix side of the membrane. A helical transmembrane segment spans residues 79 to 103 (MMWTTLPAVMLLMIAFPSFILLYMC). At 104 to 247 (DEVMAPAMTI…ADFLAWIDEQ (144 aa)) the chain is on the mitochondrial intermembrane side. 6 residues coordinate Cu cation: histidine 182, cysteine 217, glutamate 219, cysteine 221, histidine 225, and methionine 228. A Mg(2+)-binding site is contributed by glutamate 219.

This sequence belongs to the cytochrome c oxidase subunit 2 family. As to quaternary structure, component of the cytochrome c oxidase (complex IV, CIV), a multisubunit enzyme composed of a catalytic core of 3 subunits and several supernumerary subunits. The complex exists as a monomer or a dimer and forms supercomplexes (SCs) in the inner mitochondrial membrane with ubiquinol-cytochrome c oxidoreductase (cytochrome b-c1 complex, complex III, CIII). Cu cation is required as a cofactor.

The protein localises to the mitochondrion inner membrane. The enzyme catalyses 4 Fe(II)-[cytochrome c] + O2 + 8 H(+)(in) = 4 Fe(III)-[cytochrome c] + 2 H2O + 4 H(+)(out). Functionally, component of the cytochrome c oxidase, the last enzyme in the mitochondrial electron transport chain which drives oxidative phosphorylation. The respiratory chain contains 3 multisubunit complexes succinate dehydrogenase (complex II, CII), ubiquinol-cytochrome c oxidoreductase (cytochrome b-c1 complex, complex III, CIII) and cytochrome c oxidase (complex IV, CIV), that cooperate to transfer electrons derived from NADH and succinate to molecular oxygen, creating an electrochemical gradient over the inner membrane that drives transmembrane transport and the ATP synthase. Cytochrome c oxidase is the component of the respiratory chain that catalyzes the reduction of oxygen to water. Electrons originating from reduced cytochrome c in the intermembrane space (IMS) are transferred via the dinuclear copper A center (CU(A)) of subunit 2 and heme A of subunit 1 to the active site in subunit 1, a binuclear center (BNC) formed by heme A3 and copper B (CU(B)). The BNC reduces molecular oxygen to 2 water molecules using 4 electrons from cytochrome c in the IMS and 4 protons from the mitochondrial matrix. The chain is Cytochrome c oxidase subunit 2 (COX2) from Brettanomyces custersianus (Yeast).